A 227-amino-acid polypeptide reads, in one-letter code: tRNA (guanine-N(7)-)-methyltransferase (227 aa).

The tract at residues 1–21 (MPDMTMKSQPDRLYGRQRGHA) is disordered. 4 residues coordinate S-adenosyl-L-methionine: Glu-54, Glu-79, Asp-114, and Asp-136. Asp-136 is a catalytic residue. Substrate contacts are provided by residues Lys-140, Asp-172, and 206–209 (TRYE).

It belongs to the class I-like SAM-binding methyltransferase superfamily. TrmB family.

The catalysed reaction is guanosine(46) in tRNA + S-adenosyl-L-methionine = N(7)-methylguanosine(46) in tRNA + S-adenosyl-L-homocysteine. The protein operates within tRNA modification; N(7)-methylguanine-tRNA biosynthesis. In terms of biological role, catalyzes the formation of N(7)-methylguanine at position 46 (m7G46) in tRNA. The chain is tRNA (guanine-N(7)-)-methyltransferase from Granulibacter bethesdensis (strain ATCC BAA-1260 / CGDNIH1).